The sequence spans 120 residues: Putative non-specific lipid-transfer protein 14 (120 aa).

Positions Met1–Ala22 are cleaved as a signal peptide. Intrachain disulfides connect Cys30–Cys80, Cys40–Cys57, Cys58–Cys102, and Cys78–Cys116.

This sequence belongs to the plant LTP family.

Its function is as follows. Plant non-specific lipid-transfer proteins transfer phospholipids as well as galactolipids across membranes. May play a role in wax or cutin deposition in the cell walls of expanding epidermal cells and certain secretory tissues. The chain is Putative non-specific lipid-transfer protein 14 (LTP14) from Arabidopsis thaliana (Mouse-ear cress).